Consider the following 227-residue polypeptide: PKHD-type hydroxylase GDI1238/Gdia_1949 (227 aa).

A Fe2OG dioxygenase domain is found at 78–178 (RVVPPLFNRY…RLASFFWTQS (101 aa)). His-96, Asp-98, and His-159 together coordinate Fe cation. Residue Arg-169 participates in 2-oxoglutarate binding.

The cofactor is Fe(2+). L-ascorbate serves as cofactor.

The sequence is that of PKHD-type hydroxylase GDI1238/Gdia_1949 from Gluconacetobacter diazotrophicus (strain ATCC 49037 / DSM 5601 / CCUG 37298 / CIP 103539 / LMG 7603 / PAl5).